The primary structure comprises 185 residues: Early nodulin-like protein 17 (185 aa).

The signal sequence occupies residues 1-21; that stretch reads MARRDQLVSFLCFFLIVSAVA. The 101-residue stretch at 37–137 folds into the Phytocyanin domain; the sequence is KQYVVGGRSG…GQRLMINVDS (101 aa). 2 N-linked (GlcNAc...) asparagine glycosylation sites follow: N79 and N94. A disulfide bridge connects residues C93 and C125. Residues 136–155 are disordered; that stretch reads DSAPSPSPSPSPAPQEAATA. A lipid anchor (GPI-anchor amidated serine) is attached at S156. A propeptide spans 157-185 (removed in mature form); that stretch reads AATSSSAATAAHALLLAAMAMMGLILGEW.

This sequence belongs to the early nodulin-like (ENODL) family. As to expression, expressed ubiquitously. Accumulates mainly in anthers, stigmas and ovaries.

Its subcellular location is the cell membrane. Functionally, may act as a carbohydrate transporter. Required for male fertility and seed yield. The chain is Early nodulin-like protein 17 from Oryza sativa subsp. japonica (Rice).